The chain runs to 783 residues: Polyribonucleotide nucleotidyltransferase 1, mitochondrial (783 aa).

The N-terminal 45 residues, 1–45 (MAACRLCCLCPCLRPLGCGPLGRPGRNRALSYLQMRALWSSTGSR), are a transit peptide targeting the mitochondrion. Lysine 250, lysine 264, and lysine 285 each carry N6-acetyllysine. An N6-succinyllysine modification is found at lysine 552. The KH domain occupies 605–664 (PVVETVKVPLSKRAKFVGPGGYHLKKLQAETGVTISQVDEETFSIFAPTPTAMHEARDFI). Positions 679–750 (GAVYTATITE…ADGRMRLSRK (72 aa)) constitute an S1 motif domain. Serine 754 carries the phosphoserine modification.

The protein belongs to the polyribonucleotide nucleotidyltransferase family. As to quaternary structure, homotrimer; in free form. Homooligomer. Component of the mitochondrial degradosome (mtEXO) complex which is a heteropentamer containing 2 copies of SUPV3L1 and 3 copies of PNPT1. As part of the mitochondrial degradosome complex, interacts with GRSF1 in an RNA-dependent manner; the interaction enhances the activity of the complex. Interacts with TCL1A; the interaction has no effect on PNPT1 exonuclease activity.

It localises to the cytoplasm. Its subcellular location is the mitochondrion matrix. It is found in the mitochondrion intermembrane space. The catalysed reaction is RNA(n+1) + phosphate = RNA(n) + a ribonucleoside 5'-diphosphate. RNA-binding protein implicated in numerous RNA metabolic processes. Catalyzes the phosphorolysis of single-stranded polyribonucleotides processively in the 3'-to-5' direction. Mitochondrial intermembrane factor with RNA-processing exoribonulease activity. Component of the mitochondrial degradosome (mtEXO) complex, that degrades 3' overhang double-stranded RNA with a 3'-to-5' directionality in an ATP-dependent manner. Involved in the degradation of non-coding mitochondrial transcripts (MT-ncRNA) and tRNA-like molecules. Required for correct processing and polyadenylation of mitochondrial mRNAs. Plays a role as a cytoplasmic RNA import factor that mediates the translocation of small RNA components, like the 5S RNA, the RNA subunit of ribonuclease P and the mitochondrial RNA-processing (MRP) RNA, into the mitochondrial matrix. Plays a role in mitochondrial morphogenesis and respiration; regulates the expression of the electron transport chain (ETC) components at the mRNA and protein levels. In the cytoplasm, shows a 3'-to-5' exoribonuclease mediating mRNA degradation activity; degrades c-myc mRNA upon treatment with IFNB1/IFN-beta, resulting in a growth arrest in melanoma cells. Regulates the stability of specific mature miRNAs in melanoma cells; specifically and selectively degrades miR-221, preferentially. Also plays a role in RNA cell surveillance by cleaning up oxidized RNAs. Binds to the RNA subunit of ribonuclease P, MRP RNA and miR-221 microRNA. The chain is Polyribonucleotide nucleotidyltransferase 1, mitochondrial (Pnpt1) from Mus musculus (Mouse).